The following is a 445-amino-acid chain: FAD-dependent monooxygenase sorC (445 aa).

The chain crosses the membrane as a helical span at residues 8–28 (PFEVAIVGGGITGLALAVGLL). N-linked (GlcNAc...) asparagine glycosylation occurs at Asn31. FAD is bound by residues Glu38 and Arg119. Residue Arg201 is part of the active site. The FAD site is built by Asp323 and Ala336. The N-linked (GlcNAc...) asparagine glycan is linked to Asn358.

Belongs to the paxM FAD-dependent monooxygenase family. The cofactor is FAD.

Its subcellular location is the membrane. The protein operates within secondary metabolite biosynthesis. FAD-dependent monooxygenase; part of the gene cluster that mediates the biosynthesis of sorbicillinoids, a diverse group of yellow secondary metabolites that restrict growth of competing pathogenic fungi but not of bacteria. Sorbicillinoids biosynthesis requires the action of two PKSs. SorA iteratively combines three acetyl units and the growing chain is modified by the ketoacyl reductase subunit, and optional by the enoyl reductase subunit in the second cycle. The polyketide is then handed over to the PKS SorB, which adds three more acetyl units, and two methyl groups. SorB releases an aldehyde, which undergoes spontaneous cyclization resulting in the formation of sorbicillin or 2',3'-dihydrosorbicillin. The monooxygenase sorC oxidizes sorbicillin and 2',3'-dihydrosorbicillin to 2',3'-dihydrosorbicillinol and sorbicillinol, respectively. The oxidoreductase sorD further converts sorbicillinol into oxosorbicillinol. Sorbicillinol is the building block for the other sorbicillinoids such as disorbicillinol, bisvertinolon, and dihydrobisvertinolone. In Penicillium rubens (strain ATCC 28089 / DSM 1075 / NRRL 1951 / Wisconsin 54-1255) (Penicillium chrysogenum), this protein is FAD-dependent monooxygenase sorC.